The primary structure comprises 285 residues: 3-methyl-2-oxobutanoate hydroxymethyltransferase (285 aa).

The interval 1-22 (MSEHNVYGAAQPAQPGQPAQPR) is disordered. Residues 8 to 21 (GAAQPAQPGQPAQP) show a composition bias toward low complexity. Mg(2+) is bound by residues D66 and D105. Residues 66 to 67 (DS), D105, and K135 contribute to the 3-methyl-2-oxobutanoate site. Mg(2+) is bound at residue E137. The active-site Proton acceptor is the E203.

This sequence belongs to the PanB family. Homodecamer; pentamer of dimers. It depends on Mg(2+) as a cofactor.

It localises to the cytoplasm. The catalysed reaction is 3-methyl-2-oxobutanoate + (6R)-5,10-methylene-5,6,7,8-tetrahydrofolate + H2O = 2-dehydropantoate + (6S)-5,6,7,8-tetrahydrofolate. The protein operates within cofactor biosynthesis; (R)-pantothenate biosynthesis; (R)-pantoate from 3-methyl-2-oxobutanoate: step 1/2. Functionally, catalyzes the reversible reaction in which hydroxymethyl group from 5,10-methylenetetrahydrofolate is transferred onto alpha-ketoisovalerate to form ketopantoate. This chain is 3-methyl-2-oxobutanoate hydroxymethyltransferase, found in Mycolicibacterium paratuberculosis (strain ATCC BAA-968 / K-10) (Mycobacterium paratuberculosis).